We begin with the raw amino-acid sequence, 123 residues long: Large ribosomal subunit protein bL12 (123 aa).

It belongs to the bacterial ribosomal protein bL12 family. Homodimer. Part of the ribosomal stalk of the 50S ribosomal subunit. Forms a multimeric L10(L12)X complex, where L10 forms an elongated spine to which 2 to 4 L12 dimers bind in a sequential fashion. Binds GTP-bound translation factors.

Forms part of the ribosomal stalk which helps the ribosome interact with GTP-bound translation factors. Is thus essential for accurate translation. The chain is Large ribosomal subunit protein bL12 from Salmonella arizonae (strain ATCC BAA-731 / CDC346-86 / RSK2980).